A 382-amino-acid polypeptide reads, in one-letter code: MRALAYFKKGDIHFTNDIPRPEIQTDDEVIIDVSWCGICGSDLHEYLDGPIFMPKDGECHKLSNAALPLAMGHEMSGIVSKVGPKVTKVKVGDHVVVDAASSCADLHCWPHSKFYNSKPCDACQRGSENLCTHAGFVGLGVISGGFAEQVVVSQHHIIPVPKEIPLDVAALVEPLSVTWHAVKISGFKKGSSALVLGAGPIGLCTILVLKGMGASKIVVSEIAERRIEMAKKLGVEVFNPSKHGHKSIEILRGLTKSHDGFDYSYDCSGIQVTFETSLKALTFKGTATNIAVWGPKPVPFQPMDVTLQEKVMTGSIGYVVEDFEEVVRAIHNGDIAMEDCKQLITGKQRIEDGWEKGFQELMDHKESNVKILLTPNNHGEMK.

Residue cysteine 39 participates in Zn(2+) binding. Serine 63 is subject to Phosphoserine. Histidine 73, cysteine 103, cysteine 120, cysteine 123, cysteine 131, and glutamate 173 together coordinate Zn(2+).

This sequence belongs to the zinc-containing alcohol dehydrogenase family. In terms of assembly, homodimer. The cofactor is Zn(2+).

It is found in the cytoplasm. The catalysed reaction is (R,R)-butane-2,3-diol + NAD(+) = (R)-acetoin + NADH + H(+). In terms of biological role, NAD-dependent (R,R)-butanediol dehydrogenase which catalyzes oxidation of (R,R)-butane-2,3-diol to (3R)-acetoin, of meso-butanediol to (3S)-acetoin, and reduction of acetoin. Allows the use of 2,3-butanediol as an aerobic carbon source. The chain is (R,R)-butanediol dehydrogenase (BDH1) from Saccharomyces cerevisiae (strain ATCC 204508 / S288c) (Baker's yeast).